Here is a 640-residue protein sequence, read N- to C-terminus: tRNA-dihydrouridine(47) synthase [NAD(P)(+)]-like (640 aa).

The segment covering 1–10 (MAEVAEVAAE) has biased composition (low complexity). Disordered stretches follow at residues 1–22 (MAEV…VGAC) and 47–106 (DKQE…PHMK). Ala-2 bears the N-acetylalanine mark. Over residues 64-91 (PEAKRIRLEDGQENGKTEVAVESHERQV) the composition is skewed to basic and acidic residues. Basic residues predominate over residues 92 to 106 (PKRARGQNKSRPHMK). 2 C3H1-type zinc fingers span residues 110–140 (YDKE…HDVG) and 148–178 (ADLG…HLGP). Ser-267 is modified (phosphoserine). FMN-binding positions include 301 to 303 (PLT) and Gln-355. Catalysis depends on Cys-386, which acts as the Proton donor. Lys-406 participates in a covalent cross-link: Glycyl lysine isopeptide (Lys-Gly) (interchain with G-Cter in SUMO2). Residues Lys-425, His-455, 487–489 (NGD), and 510–511 (AR) contribute to the FMN site.

This sequence belongs to the Dus family. Dus3 subfamily. It depends on FMN as a cofactor.

The catalysed reaction is 5,6-dihydrouridine(47) in tRNA + NAD(+) = uridine(47) in tRNA + NADH + H(+). It catalyses the reaction 5,6-dihydrouridine(47) in tRNA + NADP(+) = uridine(47) in tRNA + NADPH + H(+). The enzyme catalyses a 5,6-dihydrouridine in mRNA + NAD(+) = a uridine in mRNA + NADH + H(+). It carries out the reaction a 5,6-dihydrouridine in mRNA + NADP(+) = a uridine in mRNA + NADPH + H(+). Functionally, catalyzes the synthesis of dihydrouridine, a modified base, in various RNAs, such as tRNAs, mRNAs and some long non-coding RNAs (lncRNAs). Mainly modifies the uridine in position 47 (U47) in the D-loop of most cytoplasmic tRNAs. Also able to mediate the formation of dihydrouridine in some mRNAs, thereby regulating their translation. The polypeptide is tRNA-dihydrouridine(47) synthase [NAD(P)(+)]-like (Rattus norvegicus (Rat)).